The following is a 211-amino-acid chain: MGNCGRKVLRALSFLLLLGSSSAQGTWEAMLPARLAEKSRAEEVAATGSRQPHADRCPPPPRTLPPGACQATRCQADSECPRHRRCCYNGCAYACLEAVPPPPVLDWLVQPKPRWLGGNGWLLDGPEEVLQAETCSTTEDGAEPLLCPSGYECHILQPGDEAQGIPNHGQCVKQRRQAEGRVLRQRLHKEYPEGDSKNVAEPGKGQQRHFP.

The first 23 residues, 1–23 (MGNCGRKVLRALSFLLLLGSSSA), serve as a signal peptide directing secretion. The WAP domain maps to 50–99 (RQPHADRCPPPPRTLPPGACQATRCQADSECPRHRRCCYNGCAYACLEAV). 4 cysteine pairs are disulfide-bonded: C57/C87, C69/C91, C74/C86, and C80/C95. The segment covering 182–198 (VLRQRLHKEYPEGDSKN) has biased composition (basic and acidic residues). The tract at residues 182-211 (VLRQRLHKEYPEGDSKNVAEPGKGQQRHFP) is disordered.

Its subcellular location is the secreted. Functionally, has growth inhibitory activity. This Mus musculus (Mouse) protein is WAP four-disulfide core domain protein 1 (Wfdc1).